The sequence spans 198 residues: Pyridoxal 5'-phosphate synthase subunit PdxT (198 aa).

50–52 (GES) is an L-glutamine binding site. The active-site Nucleophile is cysteine 82. L-glutamine-binding positions include arginine 111 and 140-141 (IR). Residues histidine 177 and glutamate 179 each act as charge relay system in the active site.

It belongs to the glutaminase PdxT/SNO family. As to quaternary structure, in the presence of PdxS, forms a dodecamer of heterodimers. Only shows activity in the heterodimer.

It carries out the reaction aldehydo-D-ribose 5-phosphate + D-glyceraldehyde 3-phosphate + L-glutamine = pyridoxal 5'-phosphate + L-glutamate + phosphate + 3 H2O + H(+). The catalysed reaction is L-glutamine + H2O = L-glutamate + NH4(+). It participates in cofactor biosynthesis; pyridoxal 5'-phosphate biosynthesis. Catalyzes the hydrolysis of glutamine to glutamate and ammonia as part of the biosynthesis of pyridoxal 5'-phosphate. The resulting ammonia molecule is channeled to the active site of PdxS. The polypeptide is Pyridoxal 5'-phosphate synthase subunit PdxT (Leifsonia xyli subsp. xyli (strain CTCB07)).